A 145-amino-acid chain; its full sequence is NADH-ubiquinone oxidoreductase subunit 8 (145 aa).

4Fe-4S ferredoxin-type domains lie at 43–73 (LRFY…VRVG) and 83–112 (DWFT…HSLF). Residues Cys-53, Cys-56, Cys-59, Cys-63, Cys-92, Cys-95, Cys-98, and Cys-102 each contribute to the [4Fe-4S] cluster site.

The protein belongs to the complex I 23 kDa subunit family. Requires [4Fe-4S] cluster as cofactor.

Its subcellular location is the mitochondrion. The catalysed reaction is a ubiquinone + NADH + 5 H(+)(in) = a ubiquinol + NAD(+) + 4 H(+)(out). Its function is as follows. Core subunit of the mitochondrial membrane respiratory chain NADH dehydrogenase (Complex I) that is believed to belong to the minimal assembly required for catalysis. Complex I functions in the transfer of electrons from NADH to the respiratory chain. The immediate electron acceptor for the enzyme is believed to be ubiquinone. May donate electrons to ubiquinone. This Trypanosoma brucei brucei protein is NADH-ubiquinone oxidoreductase subunit 8 (M-ISP1).